The sequence spans 93 residues: MNRSELVAALADRAEVTRKDADAVLAAFAEVVGDIVSKGDEKVTIPGFLTFERTHRAARTARNPQTGEPIQIPAGYSVKVSAGSKLKEAAKGK.

Belongs to the bacterial histone-like protein family. As to quaternary structure, homodimer.

It localises to the cytoplasm. Its subcellular location is the nucleoid. In terms of biological role, histone-like DNA-binding protein which is capable of wrapping DNA to stabilize it, and thus to prevent its denaturation under extreme environmental conditions. This chain is DNA-binding protein HU 1 (hup1), found in Streptomyces coelicolor (strain ATCC BAA-471 / A3(2) / M145).